A 2376-amino-acid polypeptide reads, in one-letter code: Protein Ycf2 (2376 aa).

Disordered regions lie at residues 173 to 194, 226 to 256, and 952 to 1011; these read SSQL…GTED, TEIE…EMNN, and KRKK…KRKE. Low complexity predominate over residues 235 to 245; it reads KGLSGSSSKSR. 2 stretches are compositionally biased toward basic and acidic residues: residues 246 to 255 and 960 to 1009; these read LFTEGEKEMN and KRKE…PEKR. Residue 1441–1448 coordinates ATP; that stretch reads GSIGSGRS. 3 disordered regions span residues 1515 to 1534, 1860 to 2046, and 2112 to 2230; these read YEDR…DYEP, LVGS…LRPK, and PAEE…DGFS. Acidic residues predominate over residues 1866-2025; the sequence is TEEEVEGTEE…GEGTEDEEGE (160 aa). Positions 2026 to 2038 are enriched in basic and acidic residues; sequence GTEKDSSQFDNDR. 2 stretches are compositionally biased toward acidic residues: residues 2112–2129 and 2136–2213; these read PAEE…EALE and GEEE…ENDS.

This sequence belongs to the Ycf2 family.

It localises to the plastid. The protein resides in the chloroplast stroma. Probable ATPase of unknown function. Its presence in a non-photosynthetic plant (Epifagus virginiana) and experiments in tobacco indicate that it has an essential function which is probably not related to photosynthesis. The sequence is that of Protein Ycf2 from Oenothera glazioviana (Large-flowered evening primrose).